The chain runs to 566 residues: Proline--tRNA ligase (566 aa).

The protein belongs to the class-II aminoacyl-tRNA synthetase family. ProS type 1 subfamily. As to quaternary structure, homodimer.

The protein resides in the cytoplasm. The catalysed reaction is tRNA(Pro) + L-proline + ATP = L-prolyl-tRNA(Pro) + AMP + diphosphate. Its function is as follows. Catalyzes the attachment of proline to tRNA(Pro) in a two-step reaction: proline is first activated by ATP to form Pro-AMP and then transferred to the acceptor end of tRNA(Pro). As ProRS can inadvertently accommodate and process non-cognate amino acids such as alanine and cysteine, to avoid such errors it has two additional distinct editing activities against alanine. One activity is designated as 'pretransfer' editing and involves the tRNA(Pro)-independent hydrolysis of activated Ala-AMP. The other activity is designated 'posttransfer' editing and involves deacylation of mischarged Ala-tRNA(Pro). The misacylated Cys-tRNA(Pro) is not edited by ProRS. In Shouchella clausii (strain KSM-K16) (Alkalihalobacillus clausii), this protein is Proline--tRNA ligase.